A 396-amino-acid polypeptide reads, in one-letter code: Pinosylvin synthase 1 (396 aa).

Residue 60-63 (KFKR) coordinates substrate. Cysteine 170 is a catalytic residue. Substrate-binding positions include leucine 273 and 311–313 (GGH).

It belongs to the thiolase-like superfamily. Chalcone/stilbene synthases family. Homodimer.

The protein localises to the cytoplasm. The catalysed reaction is (E)-cinnamoyl-CoA + 3 malonyl-CoA + 3 H(+) = (E)-pinosylvin + 4 CO2 + 4 CoA. It catalyses the reaction 3-phenylpropanoyl-CoA + 3 malonyl-CoA + 3 H(+) = dihydropinosylvin + 4 CO2 + 4 CoA. Its pathway is phytoalexin biosynthesis; pinosylvin biosynthesis. Functionally, catalyzes the production of pinosylvin from cinnamoyl-CoA and malonyl-CoA, and dihydropinosylvin from dihydrocinnamoyl-CoA. The polypeptide is Pinosylvin synthase 1 (Pinus strobus (Eastern white pine)).